The chain runs to 256 residues: Imidazole glycerol phosphate synthase subunit HisF (256 aa).

Residues Asp-11 and Asp-130 contribute to the active site.

This sequence belongs to the HisA/HisF family. In terms of assembly, heterodimer of HisH and HisF.

Its subcellular location is the cytoplasm. It catalyses the reaction 5-[(5-phospho-1-deoxy-D-ribulos-1-ylimino)methylamino]-1-(5-phospho-beta-D-ribosyl)imidazole-4-carboxamide + L-glutamine = D-erythro-1-(imidazol-4-yl)glycerol 3-phosphate + 5-amino-1-(5-phospho-beta-D-ribosyl)imidazole-4-carboxamide + L-glutamate + H(+). It functions in the pathway amino-acid biosynthesis; L-histidine biosynthesis; L-histidine from 5-phospho-alpha-D-ribose 1-diphosphate: step 5/9. Its function is as follows. IGPS catalyzes the conversion of PRFAR and glutamine to IGP, AICAR and glutamate. The HisF subunit catalyzes the cyclization activity that produces IGP and AICAR from PRFAR using the ammonia provided by the HisH subunit. The chain is Imidazole glycerol phosphate synthase subunit HisF from Cupriavidus pinatubonensis (strain JMP 134 / LMG 1197) (Cupriavidus necator (strain JMP 134)).